Reading from the N-terminus, the 185-residue chain is Peptidyl-tRNA hydrolase (185 aa).

TRNA is bound at residue Y14. The active-site Proton acceptor is H19. The tRNA site is built by Y65, N67, and N113.

This sequence belongs to the PTH family. In terms of assembly, monomer.

The protein localises to the cytoplasm. It carries out the reaction an N-acyl-L-alpha-aminoacyl-tRNA + H2O = an N-acyl-L-amino acid + a tRNA + H(+). In terms of biological role, hydrolyzes ribosome-free peptidyl-tRNAs (with 1 or more amino acids incorporated), which drop off the ribosome during protein synthesis, or as a result of ribosome stalling. Its function is as follows. Catalyzes the release of premature peptidyl moieties from peptidyl-tRNA molecules trapped in stalled 50S ribosomal subunits, and thus maintains levels of free tRNAs and 50S ribosomes. The chain is Peptidyl-tRNA hydrolase from Rickettsia felis (strain ATCC VR-1525 / URRWXCal2) (Rickettsia azadi).